A 58-amino-acid polypeptide reads, in one-letter code: U11-ctenitoxin-Pn1b (58 aa).

5 disulfides stabilise this stretch: cysteine 2–cysteine 16, cysteine 9–cysteine 22, cysteine 15–cysteine 40, cysteine 24–cysteine 38, and cysteine 48–cysteine 55.

In terms of tissue distribution, expressed by the venom gland.

The protein resides in the secreted. Its function is as follows. Non-toxic to mice. This is U11-ctenitoxin-Pn1b from Phoneutria nigriventer (Brazilian armed spider).